We begin with the raw amino-acid sequence, 49 residues long: uncharacterized protein (49 aa).

Residues 23-43 (LYVISFVLFIVLFFGMFFKLI) traverse the membrane as a helical segment.

The protein resides in the host membrane. This is an uncharacterized protein from Spiroplasma melliferum (SpV1).